Reading from the N-terminus, the 155-residue chain is Acetylaranotin biosynthesis cluster protein L (155 aa).

The protein operates within mycotoxin biosynthesis. Nonribosomal peptide synthetase; part of the gene cluster that mediates the biosynthesis of acetylaranotin, a member of the epipolythiodioxopiperazine (ETP) class of toxins characterized by a disulfide-bridged cyclic dipeptide. The first step of acetylaranotin biosynthesis is performed by the NRPS ataP which produces diketopiperazine cyclo-L-Phe-L-Phe via the condensation of 2 phenylalanines (L-Phe). The ataC domain of ataTC then catalyzes the formation of bishydroxylation of cyclo-L-Phe-L-Phe. The glutathione S-transferase domain ataG in ataIMG further catalyzes the conjugation of two glutathiones to the bishydroxylated intermediate. Next, the dipeptidase ataJ removes the Glu residues. The following step is performed by the carbon sulfur lyase domain ataI of ataIMG which may convert the bis-cysteinyl adduct to yield an epidithiol intermediate. The ataT domain from ataTC then catalyzes the oxidation of the free dithiols, followed by a cyclization step catalyzed by the cytochrome P450 ataF. AtaF probably acts as an epoxidase to promote a dual epoxidation formation at C8 and C9 along with C8' and C9', followed by the spontaneous nucleophilic attack of the amide nitrogens N10 and N10' to yield an intermediate with the pyrrolidine partial structure. The final steps of acetylaranotin biosynthesis involve the acetylation and ring rearrangement of an epitetrathiodiketopiperazine intermediate to produce acetylaranotin. AtaH probably catalyzes the acetylation of epitetrathiodiketopiperazine to produce a diacetate and ataY is responsible for the formation of the dihydrooxepin moiety that converts the diacetate intermediate to acetylaranotin via acetylapoaranotin. Both enzymes could function independently in the absence of the other. The specific function of ataL within the pathway has still to be determined. The acetylaranotin bis-thiomethyltransferase ataS located outside of acetylaranotin gene cluster is the main thiomethyltransferase responsible for converting acetylaranotin and its related intermediates to their methylated forms. This is Acetylaranotin biosynthesis cluster protein L from Aspergillus terreus (strain NIH 2624 / FGSC A1156).